We begin with the raw amino-acid sequence, 207 residues long: Large ribosomal subunit protein uL4 (207 aa).

The disordered stretch occupies residues 47-78; sequence GTASSKTRAEVRGGGKKPWRQKGTGRARVGSS. Residues 60-71 are compositionally biased toward basic residues; sequence GGKKPWRQKGTG.

It belongs to the universal ribosomal protein uL4 family. Part of the 50S ribosomal subunit.

Its function is as follows. One of the primary rRNA binding proteins, this protein initially binds near the 5'-end of the 23S rRNA. It is important during the early stages of 50S assembly. It makes multiple contacts with different domains of the 23S rRNA in the assembled 50S subunit and ribosome. Functionally, forms part of the polypeptide exit tunnel. This chain is Large ribosomal subunit protein uL4, found in Syntrophomonas wolfei subsp. wolfei (strain DSM 2245B / Goettingen).